Reading from the N-terminus, the 191-residue chain is MIRISDAAQAHFAKLLANQEEGTQIRVFVINPGTPNAECGVSYCPPDAVEATDTALKFDLLTAYVDELSAPYLEDAEIDFVTDQLGSQLTLKAPNAKMRKVADDAPLMERVEYMLQSQINPQLAGHGGRVSLMEITEDGYAILQFGGGCNSCSMVDVTLKEGIEKQLLNEFPELKGVRDLTEHQRGEHSYY.

2 residues coordinate [4Fe-4S] cluster: C149 and C152.

Belongs to the NfuA family. In terms of assembly, homodimer. [4Fe-4S] cluster is required as a cofactor.

Involved in iron-sulfur cluster biogenesis. Binds a 4Fe-4S cluster, can transfer this cluster to apoproteins, and thereby intervenes in the maturation of Fe/S proteins. Could also act as a scaffold/chaperone for damaged Fe/S proteins. The chain is Fe/S biogenesis protein NfuA from Escherichia coli O7:K1 (strain IAI39 / ExPEC).